The following is a 694-amino-acid chain: Junctophilin-2 (694 aa).

At 1–672 (MSGGRFDFDD…EVEVEEVPNT (672 aa)) the chain is on the cytoplasmic side. 6 MORN repeats span residues 14-36 (YCGGWEGGKAHGHGLCTGPKGQG), 38-59 (YSGSWNFGFEVAGVYTWPSGNT), 60-79 (FEGYWSQGKRHGLGIETKGR), 82-104 (YKGEWTHGFKGRYGTRQSTSSGA), 106-128 (YEGTWNNGLQDGYGTETYADGGT), and 129-151 (YQGQFTNGMRHGYGVRQSVPYGM). A phosphoserine mark is found at serine 162 and serine 165. 2 disordered regions span residues 164–192 (SSLRSEHSNGTVAPDSPASPAADGPALPS) and 231–278 (RAES…AAPF). Low complexity predominate over residues 176–189 (APDSPASPAADGPA). The span at 235–244 (RTSVGSQRSR) shows a compositional bias: polar residues. Positions 250-267 (SDLSSGASDAASTASLGE) are enriched in low complexity. MORN repeat units follow at residues 290 to 312 (YMGEWKNDKRSGFGVSERSSGLR) and 313 to 335 (YEGEWLDNLRHGYGCTTLPDGHR). Residues 350-364 (KRRVLPLKSNKVRQK) carry the Bipartite nuclear localization signal motif. Serine 445, serine 447, and serine 466 each carry phosphoserine. The interval 448 to 663 (LLEPPDRGAA…KEAAQAAEAE (216 aa)) is disordered. A compositionally biased stretch (basic and acidic residues) spans 467 to 476 (PQLHERETPR). Threonine 474 is modified (phosphothreonine). Pro residues predominate over residues 478-491 (EGGPPSPAGTPPQP). Residue serine 483 is modified to Phosphoserine. Threonine 487 is subject to Phosphothreonine. Positions 492–496 (KRPRP) match the Nuclear localization signal motif. Positions 522-540 (SRPATPAAAGAGRRSPARP) are enriched in low complexity. A phosphoserine mark is found at serine 536, serine 542, serine 596, and serine 600. Residues 589 to 610 (PEAADPDSAPASPATAPGQAPA) show a composition bias toward low complexity. Residues 673–693 (VLICMVILLNIGLAILFVHLL) traverse the membrane as a helical; Anchor for type IV membrane protein segment.

The protein belongs to the junctophilin family. As to quaternary structure, interacts with TRPC3. Interacts with BAG5 and HSPA8; the interaction with HSPA8 is increased in the presence of BAG5. Junctophilin-2 N-terminal fragment: Interacts with MEF2C. In terms of processing, proteolytically cleaved by calpain in response to cardiac stress. The major cleavage site takes place at the C-terminus and leads to the release of the Junctophilin-2 N-terminal fragment chain (JP2NT). Post-translationally, phosphorylation on Ser-165, probably by PKC, affects RYR1-mediated calcium ion release, interaction with TRPC3, and skeletal muscle myotubule development.

The protein localises to the cell membrane. Its subcellular location is the sarcoplasmic reticulum membrane. The protein resides in the endoplasmic reticulum membrane. It is found in the nucleus. Its function is as follows. Membrane-binding protein that provides a structural bridge between the plasma membrane and the sarcoplasmic reticulum and is required for normal excitation-contraction coupling in cardiomyocytes. Provides a structural foundation for functional cross-talk between the cell surface and intracellular Ca(2+) release channels by maintaining the 12-15 nm gap between the sarcolemma and the sarcoplasmic reticulum membranes in the cardiac dyads. Necessary for proper intracellular Ca(2+) signaling in cardiac myocytes via its involvement in ryanodine receptor-mediated calcium ion release. Contributes to the construction of skeletal muscle triad junctions. Transcription repressor required to safeguard against the deleterious effects of cardiac stress. Generated following cleavage of the Junctophilin-2 chain by calpain in response to cardiac stress in cardiomyocytes. Following cleavage and release from the membrane, translocates to the nucleus, binds DNA and represses expression of genes implicated in cell growth and differentiation, hypertrophy, inflammation and fibrosis. Modifies the transcription profile and thereby attenuates pathological remodeling in response to cardiac stress. Probably acts by competing with MEF2 transcription factors and TATA-binding proteins. The sequence is that of Junctophilin-2 (JPH2) from Oryctolagus cuniculus (Rabbit).